The chain runs to 209 residues: Peroxiredoxin (209 aa).

One can recognise a Thioredoxin domain in the interval 2-156 (PLIGDKFPEM…IVRMIRAFRV (155 aa)). Residue C44 is the Cysteine sulfenic acid (-SOH) intermediate of the active site. Substrate is bound at residue R119. C198 and C204 are joined by a disulfide.

This sequence belongs to the peroxiredoxin family. Prx6 subfamily. As to quaternary structure, homodecamer. Pentamer of dimers that assemble into a ring structure.

It is found in the cytoplasm. It carries out the reaction a hydroperoxide + [thioredoxin]-dithiol = an alcohol + [thioredoxin]-disulfide + H2O. Thiol-specific peroxidase that catalyzes the reduction of hydrogen peroxide and organic hydroperoxides to water and alcohols, respectively. Plays a role in cell protection against oxidative stress by detoxifying peroxides. The polypeptide is Peroxiredoxin (Methanothermobacter thermautotrophicus (strain ATCC 29096 / DSM 1053 / JCM 10044 / NBRC 100330 / Delta H) (Methanobacterium thermoautotrophicum)).